A 660-amino-acid chain; its full sequence is Bifunctional polymyxin resistance protein ArnA (660 aa).

The interval 1–304 (MKAVIFAYHD…TLGLVAGARL (304 aa)) is formyltransferase ArnAFT. The Proton donor; for formyltransferase activity role is filled by histidine 104. (6R)-10-formyltetrahydrofolate contacts are provided by residues arginine 114 and 136-140 (VKRAD). Positions 314–660 (RRIRVLILGV…RSVDVAERAS (347 aa)) are dehydrogenase ArnADH. Residues aspartate 347 and 368–369 (DI) contribute to the NAD(+) site. UDP-alpha-D-glucuronate is bound by residues alanine 393, tyrosine 398, and 432–433 (TS). Glutamate 434 (proton acceptor; for decarboxylase activity) is an active-site residue. UDP-alpha-D-glucuronate is bound by residues arginine 460, asparagine 492, 526 to 535 (KLIDGGQQKR), and tyrosine 613. Arginine 619 serves as the catalytic Proton donor; for decarboxylase activity.

The protein in the N-terminal section; belongs to the Fmt family. UDP-L-Ara4N formyltransferase subfamily. In the C-terminal section; belongs to the NAD(P)-dependent epimerase/dehydratase family. UDP-glucuronic acid decarboxylase subfamily. In terms of assembly, homohexamer, formed by a dimer of trimers.

The catalysed reaction is UDP-alpha-D-glucuronate + NAD(+) = UDP-beta-L-threo-pentopyranos-4-ulose + CO2 + NADH. It carries out the reaction UDP-4-amino-4-deoxy-beta-L-arabinose + (6R)-10-formyltetrahydrofolate = UDP-4-deoxy-4-formamido-beta-L-arabinose + (6S)-5,6,7,8-tetrahydrofolate + H(+). Its pathway is nucleotide-sugar biosynthesis; UDP-4-deoxy-4-formamido-beta-L-arabinose biosynthesis; UDP-4-deoxy-4-formamido-beta-L-arabinose from UDP-alpha-D-glucuronate: step 1/3. It participates in nucleotide-sugar biosynthesis; UDP-4-deoxy-4-formamido-beta-L-arabinose biosynthesis; UDP-4-deoxy-4-formamido-beta-L-arabinose from UDP-alpha-D-glucuronate: step 3/3. The protein operates within bacterial outer membrane biogenesis; lipopolysaccharide biosynthesis. Its function is as follows. Bifunctional enzyme that catalyzes the oxidative decarboxylation of UDP-glucuronic acid (UDP-GlcUA) to UDP-4-keto-arabinose (UDP-Ara4O) and the addition of a formyl group to UDP-4-amino-4-deoxy-L-arabinose (UDP-L-Ara4N) to form UDP-L-4-formamido-arabinose (UDP-L-Ara4FN). The modified arabinose is attached to lipid A and is required for resistance to polymyxin and cationic antimicrobial peptides. The chain is Bifunctional polymyxin resistance protein ArnA from Salmonella newport (strain SL254).